The following is a 359-amino-acid chain: ATP synthase subunit gamma, chloroplastic (359 aa).

Residues 1–35 (MSCSHLSTAWSSSALASSASTTRRRSPPRSGLLVR) constitute a chloroplast transit peptide. Cys124 is a catalytic residue. The cysteines at positions 234 and 240 are disulfide-linked.

Belongs to the ATPase gamma chain family. F-type ATPases have 2 components, CF(1) - the catalytic core - and CF(0) - the membrane proton channel. CF(1) has five subunits: alpha(3), beta(3), gamma(1), delta(1), epsilon(1). CF(0) has four main subunits: a, b, b' and c.

The protein localises to the plastid. Its subcellular location is the chloroplast thylakoid membrane. In terms of biological role, produces ATP from ADP in the presence of a proton gradient across the membrane. The gamma chain is believed to be important in regulating ATPase activity and the flow of protons through the CF(0) complex. Functionally, inceptin is a proteolytic fragment produced by insect larvae that previously ingested the protein. This peptide mediate plant perception of herbivory through the induction of volatile, phenylpropanoid and protease inhibitor defenses such as ethylene, jasmonic acid and salicylic acid for example. The chain is ATP synthase subunit gamma, chloroplastic from Zea mays (Maize).